The sequence spans 861 residues: Leucine--tRNA ligase (861 aa).

A 'HIGH' region motif is present at residues 43–53 (PYPSGKLHMGH). Residues 588–592 (KMSKS) carry the 'KMSKS' region motif. ATP is bound at residue Lys-591.

The protein belongs to the class-I aminoacyl-tRNA synthetase family.

The protein resides in the cytoplasm. The enzyme catalyses tRNA(Leu) + L-leucine + ATP = L-leucyl-tRNA(Leu) + AMP + diphosphate. This is Leucine--tRNA ligase from Symbiobacterium thermophilum (strain DSM 24528 / JCM 14929 / IAM 14863 / T).